The primary structure comprises 250 residues: 3-deoxy-manno-octulosonate cytidylyltransferase (250 aa).

Belongs to the KdsB family.

It is found in the cytoplasm. The catalysed reaction is 3-deoxy-alpha-D-manno-oct-2-ulosonate + CTP = CMP-3-deoxy-beta-D-manno-octulosonate + diphosphate. The protein operates within nucleotide-sugar biosynthesis; CMP-3-deoxy-D-manno-octulosonate biosynthesis; CMP-3-deoxy-D-manno-octulosonate from 3-deoxy-D-manno-octulosonate and CTP: step 1/1. It participates in bacterial outer membrane biogenesis; lipopolysaccharide biosynthesis. Functionally, activates KDO (a required 8-carbon sugar) for incorporation into bacterial lipopolysaccharide in Gram-negative bacteria. The sequence is that of 3-deoxy-manno-octulosonate cytidylyltransferase from Francisella tularensis subsp. holarctica (strain LVS).